Consider the following 140-residue polypeptide: uncharacterized protein (140 aa).

Transmembrane regions (helical) follow at residues 26–43 (YLDLLLVLSIIDVLTGVI) and 64–86 (LLNFFAVILANVIDTVLNLNGVL).

It belongs to the bacteriophage holin family. Cp-1 holin subfamily.

The protein resides in the cell membrane. This is an uncharacterized protein from Bacillus subtilis (strain 168).